The primary structure comprises 468 residues: Transmembrane protein 151B (468 aa).

Positions 1-25 (MPEDGGGDSGDVPEIIPDGEPLREE) are disordered. 2 helical membrane-spanning segments follow: residues 45-65 (CLLL…CRLA) and 98-118 (YLYI…AECW). Residues 384 to 438 (VSSNSLPPARPSGPRLPFSRSRLSLGAGGRATPGVFRSLSGGPLGRRGEDTEPLE) are disordered.

This sequence belongs to the TMEM151 family.

Its subcellular location is the membrane. This chain is Transmembrane protein 151B (TMEM151B), found in Bos taurus (Bovine).